The sequence spans 380 residues: Rab9 effector protein with kelch motifs (380 aa).

Kelch repeat units follow at residues 57–103 (KIFI…FLPS), 108–154 (SIWV…TSSA), 159–211 (QLYV…AAGT), 212–258 (KLFI…AAVA), 262–311 (HVYM…VIPW), and 357–380 (LCFV…TVVD).

Interacts with PIKFYVE; the interaction recruits RABEPK to the endosomal membrane. Interacts with RAB9 in its GTP-bound conformation. In terms of processing, phosphorylated on Ser residues by PIKFYVE.

It is found in the cytoplasm. Its subcellular location is the endosome membrane. Rab9 effector required for endosome to trans-Golgi network (TGN) transport. The sequence is that of Rab9 effector protein with kelch motifs from Mus musculus (Mouse).